A 138-amino-acid chain; its full sequence is ATP synthase epsilon chain (138 aa).

This sequence belongs to the ATPase epsilon chain family. F-type ATPases have 2 components, CF(1) - the catalytic core - and CF(0) - the membrane proton channel. CF(1) has five subunits: alpha(3), beta(3), gamma(1), delta(1), epsilon(1). CF(0) has three main subunits: a, b and c.

Its subcellular location is the cell inner membrane. In terms of biological role, produces ATP from ADP in the presence of a proton gradient across the membrane. The polypeptide is ATP synthase epsilon chain (Delftia acidovorans (strain DSM 14801 / SPH-1)).